The following is a 355-amino-acid chain: Peptide chain release factor 1 (355 aa).

Residue Q231 is modified to N5-methylglutamine.

Belongs to the prokaryotic/mitochondrial release factor family. Post-translationally, methylated by PrmC. Methylation increases the termination efficiency of RF1.

Its subcellular location is the cytoplasm. Peptide chain release factor 1 directs the termination of translation in response to the peptide chain termination codons UAG and UAA. In Aliarcobacter butzleri (strain RM4018) (Arcobacter butzleri), this protein is Peptide chain release factor 1.